Consider the following 148-residue polypeptide: uncharacterized protein (148 aa).

Residues 1–11 (MKPRNINNSLP) are compositionally biased toward polar residues. The tract at residues 1–31 (MKPRNINNSLPLQPLVPDQENKNKKNEEKSV) is disordered. The segment covering 19-30 (QENKNKKNEEKS) has biased composition (basic and acidic residues).

This is an uncharacterized protein from Escherichia coli (strain K12).